Reading from the N-terminus, the 360-residue chain is Ribosomal RNA small subunit methyltransferase C (360 aa).

The protein belongs to the methyltransferase superfamily. RsmC family. As to quaternary structure, monomer.

It localises to the cytoplasm. The enzyme catalyses guanosine(1207) in 16S rRNA + S-adenosyl-L-methionine = N(2)-methylguanosine(1207) in 16S rRNA + S-adenosyl-L-homocysteine + H(+). In terms of biological role, specifically methylates the guanine in position 1207 of 16S rRNA in the 30S particle. The polypeptide is Ribosomal RNA small subunit methyltransferase C (Alteromonas mediterranea (strain DSM 17117 / CIP 110805 / LMG 28347 / Deep ecotype)).